A 478-amino-acid chain; its full sequence is Pentraxin-4 (478 aa).

The N-terminal stretch at 1–25 (MGCSWRKTLSFFLVFVPIYLHGASS) is a signal peptide. Asn-67 and Asn-91 each carry an N-linked (GlcNAc...) asparagine glycan. Positions 208–222 (RDRQELRAASEHRGP) are enriched in basic and acidic residues. The segment at 208–262 (RDRQELRAASEHRGPPQDSSAPLQGRREPPASGSHRVLSGTAPKDPRQQAWSPQV) is disordered. One can recognise a Pentraxin (PTX) domain in the interval 269–473 (VGPTLVFPNA…GFVQGANCTC (205 aa)). A disulfide bridge connects residues Cys-300 and Cys-364. The Ca(2+) site is built by Asp-322, Asn-323, Glu-406, Gln-407, and Asp-408.

Requires Ca(2+) as cofactor. In terms of tissue distribution, widely expressed at low levels with highest levels in small intestine, testis and brain. Very low expression in endothelial cells, monocytes, neutrophils and lymphocytes. Isoform 1 is not expressed in small intestine.

The protein localises to the secreted. The sequence is that of Pentraxin-4 (PTX4) from Homo sapiens (Human).